The sequence spans 84 residues: Small ribosomal subunit protein bS20 (84 aa).

Residues 1 to 22 form a disordered region; that stretch reads MPAPTKRERQNRKRFERNRSVR. Positions 9-22 are enriched in basic residues; it reads RQNRKRFERNRSVR.

Belongs to the bacterial ribosomal protein bS20 family.

Binds directly to 16S ribosomal RNA. The protein is Small ribosomal subunit protein bS20 of Rubrobacter xylanophilus (strain DSM 9941 / JCM 11954 / NBRC 16129 / PRD-1).